We begin with the raw amino-acid sequence, 105 residues long: Intracellular chorismate mutase (105 aa).

One can recognise a Chorismate mutase domain in the interval 23–105; sequence SQPVPEIDTL…LRLGRGRLGH (83 aa). Chorismate is bound by residues Arg61, Val70, and Glu74.

As to quaternary structure, homodimer. Interacts with AroG.

It localises to the cytoplasm. It carries out the reaction chorismate = prephenate. It functions in the pathway metabolic intermediate biosynthesis; prephenate biosynthesis; prephenate from chorismate: step 1/1. With respect to regulation, the formation of the complex with AroG activates the chorismate mutase activity. Catalyzes the Claisen rearrangement of chorismate to prephenate. Probably involved in the aromatic amino acid biosynthesis. This is Intracellular chorismate mutase from Mycobacterium bovis (strain ATCC BAA-935 / AF2122/97).